Consider the following 196-residue polypeptide: METLNIFLVIFSLLGTIIIASSSDESSERKKRDLDTIDDTNNDFLTADKRRPGWGKRSFDDDILNNLDKRRPGWGKRSDMLFDSEEIEKRRPGWGKRSSSLYDDEKRKPGWGKRSSALLDDLSLYNSIVKRRPGWGKRSDTFKVDIRRPGWGKRTPGWGKRSGPNMCMDFQDEILQLYKLLNEAEKLHSECEALNI.

Positions 1-22 (METLNIFLVIFSLLGTIIIASS) are cleaved as a signal peptide. A propeptide spanning residues 23–48 (SDESSERKKRDLDTIDDTNNDFLTAD) is cleaved from the precursor. W54 is modified (tryptophan amide). Residues 58–68 (SFDDDILNNLD) constitute a propeptide that is removed on maturation. A Tryptophan amide modification is found at W74. The propeptide occupies 78–88 (SDMLFDSEEIE). Residue W94 is modified to Tryptophan amide. The propeptide occupies 98 to 105 (SSSLYDDE). Tryptophan amide is present on W111. Positions 115-129 (SSALLDDLSLYNSIV) are excised as a propeptide. At W135 the chain carries Tryptophan amide. The propeptide occupies 139–146 (SDTFKVDI). Residues W151 and W158 each carry the tryptophan amide modification. Positions 162-196 (SGPNMCMDFQDEILQLYKLLNEAEKLHSECEALNI) are excised as a propeptide.

Expressed in cerebral, pedal and visceral ganglia. TPGW-amide is found in pedal and cerebral ganglia and in shell adductor muscle (at protein level). RPGW-amide and KPGW-amide are found in pedal retractor muscle, ABRM and shell adductor muscle (at protein level).

Functionally, RPGW-amide, KPGW-amide and TPGW-amide tetrapeptides are involved in control of muscle contraction and may function as neurotransmitters. These peptides increase tension of the pedal retractor muscle and, in conjunction with FMRF-amide, increase peak tension of the anterior byssus retractor muscle (ABRM). This is APGW-amide-related neuropeptide from Mytilus edulis (Blue mussel).